The sequence spans 486 residues: Ribulose bisphosphate carboxylase large chain (486 aa).

Residues Asn-126 and Thr-176 each coordinate substrate. Lys-178 acts as the Proton acceptor in catalysis. Position 180 (Lys-180) interacts with substrate. Positions 204, 206, and 207 each coordinate Mg(2+). N6-carboxylysine is present on Lys-204. His-296 (proton acceptor) is an active-site residue. Substrate contacts are provided by Arg-297, His-329, and Ser-381.

Belongs to the RuBisCO large chain family. Type I subfamily. As to quaternary structure, heterohexadecamer of 8 large chains and 8 small chains. Mg(2+) is required as a cofactor.

It carries out the reaction 2 (2R)-3-phosphoglycerate + 2 H(+) = D-ribulose 1,5-bisphosphate + CO2 + H2O. The catalysed reaction is D-ribulose 1,5-bisphosphate + O2 = 2-phosphoglycolate + (2R)-3-phosphoglycerate + 2 H(+). RuBisCO catalyzes two reactions: the carboxylation of D-ribulose 1,5-bisphosphate, the primary event in carbon dioxide fixation, as well as the oxidative fragmentation of the pentose substrate. Both reactions occur simultaneously and in competition at the same active site. The polypeptide is Ribulose bisphosphate carboxylase large chain (Cupriavidus taiwanensis (strain DSM 17343 / BCRC 17206 / CCUG 44338 / CIP 107171 / LMG 19424 / R1) (Ralstonia taiwanensis (strain LMG 19424))).